Reading from the N-terminus, the 365-residue chain is MKRQLILEDGTVLIGTGFGGEIEKSGEVVFTTGMTGYQETLSDPSYCGQIVTFTYPLIGNYGINRDDFESIHPSVNGLIVNEICNHPSNFRNEISLNDYLKERNIPGLAGIDTRKLTRKIRQYGTLRGRLCNMDADVEYIVSQLKATVFTDHVKRVSTKDPYPSPGRGHRVVLVDFGMKHGILRELNKRDCDVIVVPYNTTAEEILRLSPDGIMLSNGPGDPKDVPEAIEMLKDIIGKVPLFGICLGHQLFALASGANTSKLKFGHRGLNHPVKNLATGKVAITSQNHGYAVEEESVENTDLEITHVALNDGTVEGLRHKKFPAFTVQYHPEASAGPEDANDLFEDFLTMIENFKKEGEELCQNA.

CPSase stretches follow at residues 1-166 (MKRQ…PSPG) and 1-169 (MKRQ…GRGH). L-glutamine-binding residues include S45, G218, and G220. The Glutamine amidotransferase type-1 domain maps to 170–357 (RVVLVDFGMK…LTMIENFKKE (188 aa)). The active-site Nucleophile is C245. Residues L246, Q249, N287, G289, and Y290 each coordinate L-glutamine. Catalysis depends on residues H330 and E332.

Belongs to the CarA family. Composed of two chains; the small (or glutamine) chain promotes the hydrolysis of glutamine to ammonia, which is used by the large (or ammonia) chain to synthesize carbamoyl phosphate. Tetramer of heterodimers (alpha,beta)4.

It carries out the reaction hydrogencarbonate + L-glutamine + 2 ATP + H2O = carbamoyl phosphate + L-glutamate + 2 ADP + phosphate + 2 H(+). It catalyses the reaction L-glutamine + H2O = L-glutamate + NH4(+). It functions in the pathway amino-acid biosynthesis; L-arginine biosynthesis; carbamoyl phosphate from bicarbonate: step 1/1. It participates in pyrimidine metabolism; UMP biosynthesis via de novo pathway; (S)-dihydroorotate from bicarbonate: step 1/3. Small subunit of the glutamine-dependent carbamoyl phosphate synthetase (CPSase). CPSase catalyzes the formation of carbamoyl phosphate from the ammonia moiety of glutamine, carbonate, and phosphate donated by ATP, constituting the first step of 2 biosynthetic pathways, one leading to arginine and/or urea and the other to pyrimidine nucleotides. The small subunit (glutamine amidotransferase) binds and cleaves glutamine to supply the large subunit with the substrate ammonia. The polypeptide is Carbamoyl phosphate synthase small chain (Bacillus cereus (strain ATCC 14579 / DSM 31 / CCUG 7414 / JCM 2152 / NBRC 15305 / NCIMB 9373 / NCTC 2599 / NRRL B-3711)).